A 156-amino-acid polypeptide reads, in one-letter code: Small ribosomal subunit protein uS7 (156 aa).

The protein belongs to the universal ribosomal protein uS7 family. Part of the 30S ribosomal subunit. Contacts proteins S9 and S11.

Functionally, one of the primary rRNA binding proteins, it binds directly to 16S rRNA where it nucleates assembly of the head domain of the 30S subunit. Is located at the subunit interface close to the decoding center, probably blocks exit of the E-site tRNA. The chain is Small ribosomal subunit protein uS7 from Arthrospira platensis (Spirulina platensis).